A 189-amino-acid polypeptide reads, in one-letter code: Shikimate kinase (189 aa).

Ala22–Thr27 contacts ATP. Ser26 lines the Mg(2+) pocket. Substrate-binding residues include Asp44, Arg68, and Gly90. Arg128 is an ATP binding site. Arg147 provides a ligand contact to substrate.

This sequence belongs to the shikimate kinase family. In terms of assembly, monomer. The cofactor is Mg(2+).

The protein resides in the cytoplasm. It catalyses the reaction shikimate + ATP = 3-phosphoshikimate + ADP + H(+). It participates in metabolic intermediate biosynthesis; chorismate biosynthesis; chorismate from D-erythrose 4-phosphate and phosphoenolpyruvate: step 5/7. Its function is as follows. Catalyzes the specific phosphorylation of the 3-hydroxyl group of shikimic acid using ATP as a cosubstrate. This Synechococcus sp. (strain JA-3-3Ab) (Cyanobacteria bacterium Yellowstone A-Prime) protein is Shikimate kinase.